The sequence spans 22 residues: Myofibril-bound serine protease (22 aa).

Positions 1–22 (IVGGYECEAYSKPYQVSINLGY) constitute a Peptidase S1 domain.

The protein belongs to the peptidase S1 family. In terms of tissue distribution, detected in skeletal muscle (at protein level).

Its subcellular location is the cytoplasm. In terms of biological role, serine protease which degrades the myosin heavy chain and tropomyosin, but not actin. Selectively cleaves Arg-|-Xaa bonds. The chain is Myofibril-bound serine protease from Saurida undosquamis (Brushtooth lizardfish).